A 650-amino-acid polypeptide reads, in one-letter code: Acetyl-coenzyme A synthetase (650 aa).

CoA-binding positions include 190–193 (RGGR), Thr-308, and Asn-332. Residues 384-386 (GEP), 408-413 (DTWWQT), Asp-497, and Arg-512 contribute to the ATP site. A CoA-binding site is contributed by Ser-520. Arg-523 lines the ATP pocket. Val-534, His-536, and Val-539 together coordinate Mg(2+). A CoA-binding site is contributed by Arg-581. An N6-acetyllysine modification is found at Lys-606.

This sequence belongs to the ATP-dependent AMP-binding enzyme family. Mg(2+) is required as a cofactor. In terms of processing, acetylated. Deacetylation by the SIR2-homolog deacetylase activates the enzyme.

The enzyme catalyses acetate + ATP + CoA = acetyl-CoA + AMP + diphosphate. Catalyzes the conversion of acetate into acetyl-CoA (AcCoA), an essential intermediate at the junction of anabolic and catabolic pathways. AcsA undergoes a two-step reaction. In the first half reaction, AcsA combines acetate with ATP to form acetyl-adenylate (AcAMP) intermediate. In the second half reaction, it can then transfer the acetyl group from AcAMP to the sulfhydryl group of CoA, forming the product AcCoA. This is Acetyl-coenzyme A synthetase from Bradyrhizobium sp. (strain ORS 278).